The chain runs to 317 residues: L-lactate dehydrogenase (317 aa).

NAD(+) contacts are provided by residues V17, D38, K43, Y68, and G82 to V83. R91 serves as a coordination point for substrate. Residues S104, V121–N123, and S146 contribute to the NAD(+) site. N123–D126 lines the substrate pocket. D151–R154 provides a ligand contact to substrate. K156 and H171 together coordinate beta-D-fructose 1,6-bisphosphate. Residue H178 is the Proton acceptor of the active site. At Y224 the chain carries Phosphotyrosine. T233 serves as a coordination point for substrate.

This sequence belongs to the LDH/MDH superfamily. LDH family. In terms of assembly, homotetramer.

The protein resides in the cytoplasm. The enzyme catalyses (S)-lactate + NAD(+) = pyruvate + NADH + H(+). It functions in the pathway fermentation; pyruvate fermentation to lactate; (S)-lactate from pyruvate: step 1/1. With respect to regulation, allosterically activated by fructose 1,6-bisphosphate (FBP). Functionally, catalyzes the conversion of lactate to pyruvate. In Clostridium perfringens (strain SM101 / Type A), this protein is L-lactate dehydrogenase.